A 314-amino-acid polypeptide reads, in one-letter code: Carbamate kinase (314 aa).

It belongs to the carbamate kinase family. Homodimer.

It localises to the cytoplasm. The catalysed reaction is hydrogencarbonate + NH4(+) + ATP = carbamoyl phosphate + ADP + H2O + H(+). This is Carbamate kinase (cpkA) from Pyrococcus horikoshii (strain ATCC 700860 / DSM 12428 / JCM 9974 / NBRC 100139 / OT-3).